The chain runs to 67 residues: Epsilon-conotoxin TxVA (67 aa).

Positions 1-19 (MRCFPVFIILLLLIASAPC) are cleaved as a signal peptide. The propeptide occupies 20–50 (FDARTKTDDDVPLSSLRDNLKRTIRTRLNIR). 4-carboxyglutamate is present on residues Glu51 and Glu54. 2 disulfides stabilise this stretch: Cys52/Cys58 and Cys53/Cys59. Position 57 is a 6'-bromotryptophan (Trp57). O-linked (GalNAc...) threonine glycosylation is present at Thr60. Pro63 carries the post-translational modification 4-hydroxyproline. The propeptide occupies 64–67 (LTGR).

O-glycan consists of the disaccharide Gal-GalNAc. In terms of tissue distribution, expressed by the venom duct.

Its subcellular location is the secreted. Epsilon-conotoxins act at presynaptic membranes, blocking the calcium channels or G protein-coupled receptors. Causes hyperactivity upon intracranial injection into mice. Causes dorsal fins drooping in fish. The chain is Epsilon-conotoxin TxVA from Conus textile (Cloth-of-gold cone).